The sequence spans 237 residues: Orotidine 5'-phosphate decarboxylase (237 aa).

Residues Asp17, Lys39, 66-75 (DLKLHDIGNT), Thr121, Arg182, Gln191, Gly211, and Arg212 contribute to the substrate site. The active-site Proton donor is the Lys68.

It belongs to the OMP decarboxylase family. Type 1 subfamily. In terms of assembly, homodimer.

The catalysed reaction is orotidine 5'-phosphate + H(+) = UMP + CO2. Its pathway is pyrimidine metabolism; UMP biosynthesis via de novo pathway; UMP from orotate: step 2/2. In terms of biological role, catalyzes the decarboxylation of orotidine 5'-monophosphate (OMP) to uridine 5'-monophosphate (UMP). This Rhodopseudomonas palustris (strain ATCC BAA-98 / CGA009) protein is Orotidine 5'-phosphate decarboxylase.